We begin with the raw amino-acid sequence, 748 residues long: Adenosylcobalamin-dependent ribonucleoside-triphosphate reductase (748 aa).

An intrachain disulfide couples cysteine 123 to cysteine 426. Residues 151–162 form an effector region-1 region; sequence SMPYSFMFDELM. The effector region-2 stretch occupies residues 172–320; that stretch reads TKDNIAKLPP…IGNLIGKTVV (149 aa). Active-site residues include cysteine 415 and glutamate 417. The adenosylcobalamin-binding-1 stretch occupies residues 572-633; it reads FHYAGYLIQR…DPAFASAGTV (62 aa). The segment at 692 to 733 is adenosylcobalamin-binding-2; the sequence is FKQAPKEPIDVKTYKQKCAAIHGSVAAVFAVQNADHDQKDLE.

The protein belongs to the class II ribonucleoside-triphosphate reductase family. Monomer. The cofactor is adenosylcob(III)alamin.

The catalysed reaction is a 2'-deoxyribonucleoside 5'-triphosphate + [thioredoxin]-disulfide + H2O = a ribonucleoside 5'-triphosphate + [thioredoxin]-dithiol. Allosterically regulated by ATP and dNTP. This is Adenosylcobalamin-dependent ribonucleoside-triphosphate reductase (rtpR) from Lacticaseibacillus paracasei (strain ATCC 334 / BCRC 17002 / CCUG 31169 / CIP 107868 / KCTC 3260 / NRRL B-441) (Lactobacillus paracasei).